We begin with the raw amino-acid sequence, 257 residues long: Dihydroorotate dehydrogenase B (NAD(+)), electron transfer subunit (257 aa).

Residues isoleucine 2 to valine 101 enclose the FAD-binding FR-type domain. FAD-binding positions include arginine 52 to serine 55, isoleucine 69 to arginine 71, and glycine 76 to threonine 77. The [2Fe-2S] cluster site is built by cysteine 220, cysteine 225, cysteine 228, and cysteine 244.

This sequence belongs to the PyrK family. As to quaternary structure, heterotetramer of 2 PyrK and 2 PyrD type B subunits. It depends on [2Fe-2S] cluster as a cofactor. FAD serves as cofactor.

It functions in the pathway pyrimidine metabolism; UMP biosynthesis via de novo pathway; orotate from (S)-dihydroorotate (NAD(+) route): step 1/1. Its function is as follows. Responsible for channeling the electrons from the oxidation of dihydroorotate from the FMN redox center in the PyrD type B subunit to the ultimate electron acceptor NAD(+). This Lysinibacillus sphaericus (strain C3-41) protein is Dihydroorotate dehydrogenase B (NAD(+)), electron transfer subunit.